We begin with the raw amino-acid sequence, 37 residues long: Large ribosomal subunit protein bL36c (37 aa).

The protein belongs to the bacterial ribosomal protein bL36 family.

It is found in the plastid. Its subcellular location is the chloroplast. The sequence is that of Large ribosomal subunit protein bL36c from Acorus calamus (Sweet flag).